A 367-amino-acid polypeptide reads, in one-letter code: MAVYHLLLSSPPSLLLLPPSPRRPNLTLIRRIPAHPRLGNSTSLLSSSSPVIRKILVRSTLREDQPIASDSESSPTLLIGEDSAAFELGKQKLVSWVYFGVVLGVVLFILNVVWIDNSTGFGKSFIDAVSNISGSPEVAMLMLILIFAIVHSGLASLRDIGEKLIGERAFRVLFAGISLPLAMSTIVYFINHRYDGSQLWQLQGVPGVHEAIWVANFVSFFFLYPSTFNLLEVAAVDKPKMHLWETGIMRITRHPQMVGQIVWCLAHTLWIGNTVAASASLGLIAHHLFGAWNGDRRLAKRYGEDFESIKKRTSVIPFAAIFEGRQVLPEDYYKEFVRLPYLAITALTVGAYFAHPLMQGASFRLHW.

A chloroplast-targeting transit peptide spans 1-58; that stretch reads MAVYHLLLSSPPSLLLLPPSPRRPNLTLIRRIPAHPRLGNSTSLLSSSSPVIRKILVR. A run of 6 helical transmembrane segments spans residues 95–115, 137–157, 172–192, 211–231, 269–289, and 339–359; these read SWVY…VVWI, EVAM…LASL, VLFA…FINH, AIWV…FNLL, LWIG…HHLF, and LPYL…PLMQ.

In terms of tissue distribution, expressed in leaves and at lower levels in roots.

It localises to the plastid. The protein localises to the chloroplast membrane. The catalysed reaction is 9,9',15-tri-cis-zeta-carotene = 9,9'-di-cis-zeta-carotene. Functionally, isomerase involved in the biosynthesis of carotenoids. Catalyzes the cis- to trans-conversion of the 15-cis-bond in 9,15,9'-tri-cis-zeta-carotene. The sequence is that of 15-cis-zeta-carotene isomerase, chloroplastic (Z-ISO) from Arabidopsis thaliana (Mouse-ear cress).